The primary structure comprises 483 residues: MKIAYVSYEVSPFAKAGGLADVAGALPKYIKNAGEDIYVVMPFHKNIENNYDISKFEVVKTGLIPDSHTHKSPFSVYKSYLEGSSVVIYFIKTDSLYDSKNIYDEENIFLKTSYFCDSALKTIKECEPDTNVININDWHTSLIPVYLKTHYLQDNILKKIATILTIHNIGYQGLFNPEVLNQAGLPNYLFNMNALEYYGKVNVLKGGILFSNIINTVSPTYAKEIQSEEYGYGLEGILKVRSEDLFGILNGIDYSIYDPLKDPHIFHPIESYEDKLKNKTSLQEYLGLTKDENITLISFIGRLFEQKGIDLISKIMDLLLLNDIQFVLLGTGDKKYEEYFVTLTKLYPKKISINITFDVDLAQKIYAGSDIFLMPSKYEPCGLGQMYSMRYGTVPVVRYTGGLKDTVSEYNPKDKKGTGFGFHEYKEADLLYTLMKAIYFHQKRKDDWTNIFENCMKEDFSYEKTAKKYIELYKIALDKKRGY.

Lysine 15 contacts ADP-alpha-D-glucose.

This sequence belongs to the glycosyltransferase 1 family. Bacterial/plant glycogen synthase subfamily.

It catalyses the reaction [(1-&gt;4)-alpha-D-glucosyl](n) + ADP-alpha-D-glucose = [(1-&gt;4)-alpha-D-glucosyl](n+1) + ADP + H(+). Its pathway is glycan biosynthesis; glycogen biosynthesis. In terms of biological role, synthesizes alpha-1,4-glucan chains using ADP-glucose. The protein is Glycogen synthase of Petrotoga mobilis (strain DSM 10674 / SJ95).